Reading from the N-terminus, the 105-residue chain is ATP-dependent Clp protease adapter protein ClpS (105 aa).

This sequence belongs to the ClpS family. Binds to the N-terminal domain of the chaperone ClpA.

In terms of biological role, involved in the modulation of the specificity of the ClpAP-mediated ATP-dependent protein degradation. This chain is ATP-dependent Clp protease adapter protein ClpS, found in Aeromonas salmonicida (strain A449).